The following is a 770-amino-acid chain: Probable methyltransferase PMT25 (770 aa).

Residues 1 to 17 (MAMGKYSRVDGKKSSSY) are Cytoplasmic-facing. The chain crosses the membrane as a helical; Signal-anchor for type II membrane protein span at residues 18–38 (GLTITIVLLLSLCLVGTWMFM). Over 39–770 (SSWSAPADSA…ETETIKSAIA (732 aa)) the chain is Lumenal. A disordered region spans residues 44–238 (PADSAGYSST…SSISKDQSSY (195 aa)). Residues 55–79 (TAKDVSKNDLRKEEGDRDPKNFSDE) show a composition bias toward basic and acidic residues. N75 and N107 each carry an N-linked (GlcNAc...) asparagine glycan. The span at 92–109 (QVKTDSENSAEGNQVNES) shows a compositional bias: polar residues. Composition is skewed to basic and acidic residues over residues 110 to 124 (SGEKTEAGEERKESD) and 131 to 177 (DGEK…KAEE). Residues N163 and N178 are each glycosylated (N-linked (GlcNAc...) asparagine). 2 stretches are compositionally biased toward polar residues: residues 205–220 (ESSTGDGAWSTQLVES) and 227–238 (QQSSISKDQSSY). 2 N-linked (GlcNAc...) asparagine glycosylation sites follow: N244 and N363.

The protein belongs to the methyltransferase superfamily.

The protein resides in the golgi apparatus membrane. The chain is Probable methyltransferase PMT25 from Arabidopsis thaliana (Mouse-ear cress).